A 183-amino-acid chain; its full sequence is Secreted RxLR effector protein 41 (183 aa).

The first 18 residues, Met1–Ser18, serve as a signal peptide directing secretion. The short motif at Arg41 to Arg65 is the RxLR-dEER element. N-linked (GlcNAc...) asparagine glycosylation occurs at Asn88.

It belongs to the RxLR effector family.

The protein localises to the secreted. Its subcellular location is the host nucleus. It localises to the host cytoplasm. Secreted effector that dos not suppress the host cell death induced by cell death-inducing proteins. This Plasmopara viticola (Downy mildew of grapevine) protein is Secreted RxLR effector protein 41.